The primary structure comprises 1342 residues: DNA-directed RNA polymerase subunit beta (1342 aa).

The protein belongs to the RNA polymerase beta chain family. The RNAP catalytic core consists of 2 alpha, 1 beta, 1 beta' and 1 omega subunit. When a sigma factor is associated with the core the holoenzyme is formed, which can initiate transcription.

It catalyses the reaction RNA(n) + a ribonucleoside 5'-triphosphate = RNA(n+1) + diphosphate. DNA-dependent RNA polymerase catalyzes the transcription of DNA into RNA using the four ribonucleoside triphosphates as substrates. In Shewanella amazonensis (strain ATCC BAA-1098 / SB2B), this protein is DNA-directed RNA polymerase subunit beta.